Reading from the N-terminus, the 393-residue chain is S-adenosylmethionine synthase (393 aa).

Glu-9 provides a ligand contact to Mg(2+). Position 15 (His-15) interacts with ATP. Glu-43 serves as a coordination point for K(+). 2 residues coordinate L-methionine: Glu-56 and Gln-99. ATP is bound by residues 167–169, 235–238, Asp-246, 252–253, Ala-269, Lys-273, and Lys-277; these read HGK, SGRF, and RK. Asp-246 contributes to the L-methionine binding site. Residue Lys-277 coordinates L-methionine.

The protein belongs to the AdoMet synthase family. Homotetramer. The cofactor is Mn(2+). Requires Mg(2+) as cofactor. Co(2+) is required as a cofactor. It depends on K(+) as a cofactor. In terms of tissue distribution, root.

The protein resides in the cytoplasm. It carries out the reaction L-methionine + ATP + H2O = S-adenosyl-L-methionine + phosphate + diphosphate. The protein operates within amino-acid biosynthesis; S-adenosyl-L-methionine biosynthesis; S-adenosyl-L-methionine from L-methionine: step 1/1. Functionally, catalyzes the formation of S-adenosylmethionine from methionine and ATP. The reaction comprises two steps that are both catalyzed by the same enzyme: formation of S-adenosylmethionine (AdoMet) and triphosphate, and subsequent hydrolysis of the triphosphate. This chain is S-adenosylmethionine synthase (METK), found in Pinus banksiana (Jack pine).